The following is a 211-amino-acid chain: Uridine kinase (211 aa).

An ATP-binding site is contributed by 12-19; the sequence is GGSGSGKT.

Belongs to the uridine kinase family.

Its subcellular location is the cytoplasm. It catalyses the reaction uridine + ATP = UMP + ADP + H(+). The catalysed reaction is cytidine + ATP = CMP + ADP + H(+). It participates in pyrimidine metabolism; CTP biosynthesis via salvage pathway; CTP from cytidine: step 1/3. Its pathway is pyrimidine metabolism; UMP biosynthesis via salvage pathway; UMP from uridine: step 1/1. In Geobacillus kaustophilus (strain HTA426), this protein is Uridine kinase.